The primary structure comprises 475 residues: Trifunctional enzyme subunit beta, mitochondrial (475 aa).

The transit peptide at Met1–His34 directs the protein to the mitochondrion. The residue at position 53 (Lys53) is an N6-succinyllysine. N6-acetyllysine; alternate is present on Lys73. The residue at position 73 (Lys73) is an N6-succinyllysine; alternate. Cys139 (acyl-thioester intermediate) is an active-site residue. The stretch at Ile174–Asn221 is an intramembrane region. At Lys189 the chain carries N6-acetyllysine; alternate. An N6-succinyllysine; alternate modification is found at Lys189. N6-succinyllysine occurs at positions 191, 273, and 292. Lys294 carries the N6-acetyllysine; alternate modification. Lys294 is subject to N6-succinyllysine; alternate. N6-acetyllysine is present on Lys299. Lys333 carries the N6-acetyllysine; alternate modification. Residue Lys333 is modified to N6-succinyllysine; alternate. N6-acetyllysine is present on residues Lys349 and Lys362. Cys459 acts as the Proton donor/acceptor in catalysis.

It belongs to the thiolase-like superfamily. Thiolase family. As to quaternary structure, heterotetramer of 2 alpha/HADHA and 2 beta/HADHB subunits; forms the mitochondrial trifunctional enzyme. Also purified as higher order heterooligomers including a 4 alpha/HADHA and 4 beta/HADHB heterooligomer which physiological significance remains unclear. The mitochondrial trifunctional enzyme interacts with MTLN. Interacts with RSAD2/viperin. Post-translationally, acetylation of Lys-202 is observed in liver mitochondria from fasted mice but not from fed mice.

Its subcellular location is the mitochondrion. The protein resides in the mitochondrion inner membrane. It is found in the mitochondrion outer membrane. The protein localises to the endoplasmic reticulum. The enzyme catalyses an acyl-CoA + acetyl-CoA = a 3-oxoacyl-CoA + CoA. The catalysed reaction is butanoyl-CoA + acetyl-CoA = 3-oxohexanoyl-CoA + CoA. It carries out the reaction hexanoyl-CoA + acetyl-CoA = 3-oxooctanoyl-CoA + CoA. It catalyses the reaction octanoyl-CoA + acetyl-CoA = 3-oxodecanoyl-CoA + CoA. The enzyme catalyses decanoyl-CoA + acetyl-CoA = 3-oxododecanoyl-CoA + CoA. The catalysed reaction is dodecanoyl-CoA + acetyl-CoA = 3-oxotetradecanoyl-CoA + CoA. It carries out the reaction tetradecanoyl-CoA + acetyl-CoA = 3-oxohexadecanoyl-CoA + CoA. It participates in lipid metabolism; fatty acid beta-oxidation. Mitochondrial trifunctional enzyme catalyzes the last three of the four reactions of the mitochondrial beta-oxidation pathway. The mitochondrial beta-oxidation pathway is the major energy-producing process in tissues and is performed through four consecutive reactions breaking down fatty acids into acetyl-CoA. Among the enzymes involved in this pathway, the trifunctional enzyme exhibits specificity for long-chain fatty acids. Mitochondrial trifunctional enzyme is a heterotetrameric complex composed of two proteins, the trifunctional enzyme subunit alpha/HADHA carries the 2,3-enoyl-CoA hydratase and the 3-hydroxyacyl-CoA dehydrogenase activities, while the trifunctional enzyme subunit beta/HADHB described here bears the 3-ketoacyl-CoA thiolase activity. This is Trifunctional enzyme subunit beta, mitochondrial (Hadhb) from Mus musculus (Mouse).